The following is a 135-amino-acid chain: Ribonuclease P protein component (135 aa).

The protein belongs to the RnpA family. As to quaternary structure, consists of a catalytic RNA component (M1 or rnpB) and a protein subunit.

It catalyses the reaction Endonucleolytic cleavage of RNA, removing 5'-extranucleotides from tRNA precursor.. Its function is as follows. RNaseP catalyzes the removal of the 5'-leader sequence from pre-tRNA to produce the mature 5'-terminus. It can also cleave other RNA substrates such as 4.5S RNA. The protein component plays an auxiliary but essential role in vivo by binding to the 5'-leader sequence and broadening the substrate specificity of the ribozyme. The chain is Ribonuclease P protein component from Xylella fastidiosa (strain 9a5c).